The chain runs to 301 residues: 33 kDa chaperonin (301 aa).

2 disulfide bridges follow: Cys240–Cys242 and Cys273–Cys276.

This sequence belongs to the HSP33 family. Under oxidizing conditions two disulfide bonds are formed involving the reactive cysteines. Under reducing conditions zinc is bound to the reactive cysteines and the protein is inactive.

The protein resides in the cytoplasm. In terms of biological role, redox regulated molecular chaperone. Protects both thermally unfolding and oxidatively damaged proteins from irreversible aggregation. Plays an important role in the bacterial defense system toward oxidative stress. The protein is 33 kDa chaperonin of Rippkaea orientalis (strain PCC 8801 / RF-1) (Cyanothece sp. (strain PCC 8801)).